Reading from the N-terminus, the 166-residue chain is Probable chemoreceptor glutamine deamidase CheD 1 (166 aa).

Belongs to the CheD family.

It catalyses the reaction L-glutaminyl-[protein] + H2O = L-glutamyl-[protein] + NH4(+). Probably deamidates glutamine residues to glutamate on methyl-accepting chemotaxis receptors (MCPs), playing an important role in chemotaxis. This Leptospira interrogans serogroup Icterohaemorrhagiae serovar copenhageni (strain Fiocruz L1-130) protein is Probable chemoreceptor glutamine deamidase CheD 1.